The chain runs to 208 residues: MNSRFTSAFTPFAVSLGLLLVMTSAFPTPGPLGEDFKNDTTPGRLLLTTPEKTEALIKRMVDKISAMRKEICEKNDECESSKETLAENKLNLPKMEEKDGCFQSGFNQAICLIRTTAGLLEYQIYLDYLQNEYEGNQENVRDLRKNIRTLIQILKQKIADLITTPATNTDLLEKMQSSNEWVKNAKIILILRNLENFLQFSLRAIRMK.

The first 29 residues, 1–29, serve as a signal peptide directing secretion; that stretch reads MNSRFTSAFTPFAVSLGLLLVMTSAFPTP. Asn-38 carries an N-linked (GlcNAc...) asparagine glycan. Cys-72 and Cys-78 are joined by a disulfide. Residue Ser-81 is modified to Phosphoserine. Cys-101 and Cys-111 are disulfide-bonded.

It belongs to the IL-6 superfamily. As to quaternary structure, component of a hexamer of two molecules each of IL6, IL6R and IL6ST; first binds to IL6R to associate with the signaling subunit IL6ST. Interacts with IL6R (via the N-terminal ectodomain); this interaction may be affected by IL6R-binding with SORL1, hence decreasing IL6 cis signaling. Interacts with SORL1 (via the N-terminal ectodomain); this interaction leads to IL6 internalization and lysosomal degradation. May form a trimeric complex with the soluble SORL1 ectodomain and soluble IL6R receptor; this interaction might stabilize circulating IL6, hence promoting IL6 trans signaling.

The protein resides in the secreted. In terms of biological role, cytokine with a wide variety of biological functions in immunity, tissue regeneration, and metabolism. Binds to IL6R, then the complex associates to the signaling subunit IL6ST/gp130 to trigger the intracellular IL6-signaling pathway. The interaction with the membrane-bound IL6R and IL6ST stimulates 'classic signaling', whereas the binding of IL6 and soluble IL6R to IL6ST stimulates 'trans-signaling'. Alternatively, 'cluster signaling' occurs when membrane-bound IL6:IL6R complexes on transmitter cells activate IL6ST receptors on neighboring receiver cells. Functionally, IL6 is a potent inducer of the acute phase response. Rapid production of IL6 contributes to host defense during infection and tissue injury, but excessive IL6 synthesis is involved in disease pathology. In the innate immune response, is synthesized by myeloid cells, such as macrophages and dendritic cells, upon recognition of pathogens through toll-like receptors (TLRs) at the site of infection or tissue injury. In the adaptive immune response, is required for the differentiation of B cells into immunoglobulin-secreting cells. Plays a major role in the differentiation of CD4(+) T cell subsets. Essential factor for the development of T follicular helper (Tfh) cells that are required for the induction of germinal-center formation. Required to drive naive CD4(+) T cells to the Th17 lineage. Also required for proliferation of myeloma cells and the survival of plasmablast cells. Its function is as follows. Acts as an essential factor in bone homeostasis and on vessels directly or indirectly by induction of VEGF, resulting in increased angiogenesis activity and vascular permeability. Induces, through 'trans-signaling' and synergistically with IL1B and TNF, the production of VEGF. Involved in metabolic controls, is discharged into the bloodstream after muscle contraction increasing lipolysis and improving insulin resistance. 'Trans-signaling' in central nervous system also regulates energy and glucose homeostasis. Mediates, through GLP-1, crosstalk between insulin-sensitive tissues, intestinal L cells and pancreatic islets to adapt to changes in insulin demand. Also acts as a myokine. Plays a protective role during liver injury, being required for maintenance of tissue regeneration. Also has a pivotal role in iron metabolism by regulating HAMP/hepcidin expression upon inflammation or bacterial infection. Through activation of IL6ST-YAP-NOTCH pathway, induces inflammation-induced epithelial regeneration. The polypeptide is Interleukin-6 (IL6) (Bos taurus (Bovine)).